The primary structure comprises 705 residues: CAP-Gly domain-containing linker protein 4 (705 aa).

ANK repeat units lie at residues Thr65–Asp101, Thr149–Ala180, and Asn186–Phe215. The CAP-Gly 1 domain maps to Gly303–Pro345. 2 disordered regions span residues Met391–Glu410 and Thr431–Ser479. The segment covering Pro441–Lys452 has biased composition (polar residues). A compositionally biased stretch (low complexity) spans Ser455–Ser479. Residues Gly505–Pro547 enclose the CAP-Gly 2 domain. Ser557 and Ser609 each carry phosphoserine. The CAP-Gly 3 domain occupies Gly644 to Arg686.

The protein is CAP-Gly domain-containing linker protein 4 (CLIP4) of Homo sapiens (Human).